Consider the following 102-residue polypeptide: NADH-quinone oxidoreductase subunit K (102 aa).

Transmembrane regions (helical) follow at residues 6–26 (LEHG…GLMV), 30–50 (ILFV…AFVV), and 62–82 (VMFI…LAIL).

Belongs to the complex I subunit 4L family. As to quaternary structure, NDH-1 is composed of 13 different subunits. Subunits NuoA, H, J, K, L, M, N constitute the membrane sector of the complex.

The protein localises to the cell inner membrane. The catalysed reaction is a quinone + NADH + 5 H(+)(in) = a quinol + NAD(+) + 4 H(+)(out). Functionally, NDH-1 shuttles electrons from NADH, via FMN and iron-sulfur (Fe-S) centers, to quinones in the respiratory chain. The immediate electron acceptor for the enzyme in this species is believed to be ubiquinone. Couples the redox reaction to proton translocation (for every two electrons transferred, four hydrogen ions are translocated across the cytoplasmic membrane), and thus conserves the redox energy in a proton gradient. The protein is NADH-quinone oxidoreductase subunit K of Pseudomonas syringae pv. tomato (strain ATCC BAA-871 / DC3000).